Reading from the N-terminus, the 464-residue chain is Fumarate hydratase class II (464 aa).

Substrate is bound by residues 97-99 (SGT), 128-131 (HPND), 138-140 (SSN), and Thr-186. Catalysis depends on His-187, which acts as the Proton donor/acceptor. The active site involves Ser-317. Residues Ser-318 and 323 to 325 (KVN) each bind substrate.

It belongs to the class-II fumarase/aspartase family. Fumarase subfamily. As to quaternary structure, homotetramer.

The protein localises to the cytoplasm. It catalyses the reaction (S)-malate = fumarate + H2O. Its pathway is carbohydrate metabolism; tricarboxylic acid cycle; (S)-malate from fumarate: step 1/1. Functionally, involved in the TCA cycle. Catalyzes the stereospecific interconversion of fumarate to L-malate. The chain is Fumarate hydratase class II from Leptospira interrogans serogroup Icterohaemorrhagiae serovar copenhageni (strain Fiocruz L1-130).